A 277-amino-acid chain; its full sequence is Isoprenyl transferase 1 (277 aa).

Residues 1-30 (MAVRGILGRQRREYRTPEPHPSGARPPKLG) form a disordered region. The active site involves aspartate 42. Aspartate 42 lines the Mg(2+) pocket. Substrate-binding positions include 43–46 (GNGR), tryptophan 47, arginine 55, histidine 59, and 87–89 (STE). Residue asparagine 90 is the Proton acceptor of the active site. Substrate contacts are provided by residues tryptophan 91, arginine 93, arginine 210, and 216–218 (RTS). Glutamate 229 contacts Mg(2+).

It belongs to the UPP synthase family. Homodimer. The cofactor is Mg(2+).

Its function is as follows. Catalyzes the condensation of isopentenyl diphosphate (IPP) with allylic pyrophosphates generating different type of terpenoids. This Streptomyces coelicolor (strain ATCC BAA-471 / A3(2) / M145) protein is Isoprenyl transferase 1.